Consider the following 447-residue polypeptide: MLENIRDAVRKFLTGSTPYEKAVDEFVKELQKSLISSDVNVKLVFSLTAKIKERLNKEKPPSVLERKEWFISIVYDELSKLFGGDKEPNVNPTKLPFIIMLVGVQGSGKTTTSGKLAYFYKRRGYKVGLVAADVYRPAAYDQLLQLGNQIGVPVYGEPNNQNAIEIAKKGVDTFVKNKMDIIIVDTAGRHGYGEETKLLEEMKEIYEALKPDDVILVIDASIGQKAYDLASRFHQASPIGSIIITKMDGTAKGGGALSAVAATGATIKFIGTGEKIDELEIFNAKRYVSRILGMGDIESILEKVKGLEEYEKIQKKMEDVMEGKGKLTLRDVYAQIMALRKMGPLSKVLQHIPGLGVMLPTPSEDQLKLGEEKIRRWLAALNSMTYKELENPSIIDKSRMRRIAEGSGLEVEDVRELLEWYNNMNKLLKMVKRRRGSIDKLFGGKIG.

Residues 103–110, 185–189, and 245–248 contribute to the GTP site; these read GVQGSGKT, DTAGR, and TKMD.

This sequence belongs to the GTP-binding SRP family. SRP54 subfamily. In terms of assembly, part of the signal recognition particle protein translocation system, which is composed of SRP and FtsY. Archaeal SRP consists of a 7S RNA molecule of 300 nucleotides and two protein subunits: SRP54 and SRP19.

It localises to the cytoplasm. It carries out the reaction GTP + H2O = GDP + phosphate + H(+). In terms of biological role, involved in targeting and insertion of nascent membrane proteins into the cytoplasmic membrane. Binds to the hydrophobic signal sequence of the ribosome-nascent chain (RNC) as it emerges from the ribosomes. The SRP-RNC complex is then targeted to the cytoplasmic membrane where it interacts with the SRP receptor FtsY. In Saccharolobus islandicus (strain M.16.27) (Sulfolobus islandicus), this protein is Signal recognition particle 54 kDa protein.